A 161-amino-acid chain; its full sequence is Transcription antitermination protein NusB (161 aa).

Belongs to the NusB family.

In terms of biological role, involved in transcription antitermination. Required for transcription of ribosomal RNA (rRNA) genes. Binds specifically to the boxA antiterminator sequence of the ribosomal RNA (rrn) operons. The protein is Transcription antitermination protein NusB of Syntrophus aciditrophicus (strain SB).